Reading from the N-terminus, the 383-residue chain is Acetylornithine deacetylase (383 aa).

Zn(2+) is bound at residue His-80. Asp-82 is a catalytic residue. Asp-112 contacts Zn(2+). Glu-144 is an active-site residue. Residues Glu-145, Glu-169, and His-355 each coordinate Zn(2+).

This sequence belongs to the peptidase M20A family. ArgE subfamily. In terms of assembly, homodimer. Zn(2+) serves as cofactor. The cofactor is Co(2+). It depends on glutathione as a cofactor.

It localises to the cytoplasm. It carries out the reaction N(2)-acetyl-L-ornithine + H2O = L-ornithine + acetate. Its pathway is amino-acid biosynthesis; L-arginine biosynthesis; L-ornithine from N(2)-acetyl-L-ornithine (linear): step 1/1. Its function is as follows. Catalyzes the hydrolysis of the amide bond of N(2)-acetylated L-amino acids. Cleaves the acetyl group from N-acetyl-L-ornithine to form L-ornithine, an intermediate in L-arginine biosynthesis pathway, and a branchpoint in the synthesis of polyamines. The chain is Acetylornithine deacetylase from Escherichia coli O45:K1 (strain S88 / ExPEC).